The primary structure comprises 525 residues: Nucleolar and spindle-associated protein 1-A (525 aa).

Disordered stretches follow at residues 46–205 (ESKD…LHEA), 248–292 (EKTP…RFSA), 373–397 (TPESEPKQMLPSVKKNEPMATPEKA), and 451–525 (SLSR…VPVQ). Polar residues predominate over residues 58-69 (SSLTDTDELNSS). Basic residues predominate over residues 82 to 92 (THRRGRGRKPL). The span at 106-127 (SVGTGTESLASETDNTQDQNCL) shows a compositional bias: polar residues. The segment covering 160–169 (TTEKRQKKAS) has biased composition (basic and acidic residues). A compositionally biased stretch (polar residues) spans 270-285 (PPTTGASPSRTPTNQR). Residues 476-494 (CGSNNNVSVLKNNFKQPHL) show a composition bias toward polar residues. Basic and acidic residues predominate over residues 495–514 (QTREDRRKQHEQDRKGKRDQ).

It belongs to the NUSAP family. Interacts with DNA. Interacts with microtubules, ipo7, kpna2 and kpnb1. Microtubule stabilization is inhibited by ipo7 and kpna2, while microtubule bundling is inhibited by kpnb1. Active GTP-bound ran causes dissociation of ipo7 and kpnb1.

The protein resides in the cytoplasm. Its subcellular location is the nucleus. It localises to the cytoskeleton. The protein localises to the spindle. Its function is as follows. Microtubule-associated protein with the capacity to bundle and stabilize microtubules. May associate with chromosomes and promote the organization of meiotic or mitotic spindle microtubules around them. This chain is Nucleolar and spindle-associated protein 1-A (nusap1-a), found in Xenopus laevis (African clawed frog).